Reading from the N-terminus, the 619-residue chain is N-acetylmuramoyl-L-alanine amidase domain-containing protein SAOUHSC_02979 (619 aa).

The N-terminal stretch at 1 to 27 is a signal peptide; sequence MPKNKILIYLLSTTLVLPTLVSPTAYA. 3 disordered regions span residues 25–83, 134–226, and 238–290; these read AYAD…TIDD, SDYE…SMSD, and EDAK…NQKD. Composition is skewed to basic and acidic residues over residues 30–65, 73–82, and 137–146; these read PQKD…KADK, NNDKKFKTID, and EQPRNGEKST. Over residues 147–156 the composition is skewed to low complexity; it reads NDSNKNSDNS. A compositionally biased stretch (basic and acidic residues) spans 157–175; the sequence is IKNDTDTQSSKQDKADNQK. Over residues 176-192 the composition is skewed to polar residues; it reads APKSNNTKPSTSNKQPN. Residues 214 to 226 show a composition bias toward low complexity; it reads QKSSSKDNQSMSD. A compositionally biased stretch (basic and acidic residues) spans 238–260; it reads EDAKKTQKDYASQSKKDKNEKSN. The segment at 327–468 is N-acetylmuramoyl-L-alanine amidase; it reads IAKDAHRIGQ…LNSIIKHYQL (142 aa). In terms of domain architecture, Peptidase C51 spans 488–617; it reads DYDDSSDEFK…AAAEELSYIT (130 aa).

The protein in the N-terminal section; belongs to the N-acetylmuramoyl-L-alanine amidase 2 family.

It localises to the secreted. This is N-acetylmuramoyl-L-alanine amidase domain-containing protein SAOUHSC_02979 from Staphylococcus aureus (strain NCTC 8325 / PS 47).